Here is a 552-residue protein sequence, read N- to C-terminus: Probable glucomannan 4-beta-mannosyltransferase 10 (552 aa).

The chain crosses the membrane as a helical span at residues 62-82 (IVPLFKCLVAFCLIISLLVFI). D161 is a catalytic residue. Substrate contacts are provided by D220 and D222. Residue D314 is part of the active site. The next 4 membrane-spanning stretches (helical) occupy residues 393–413 (IIVH…SVFF), 430–450 (ITLC…FWIL), 509–529 (EIMV…FGNT), and 530–550 (LLYL…VGFV).

It belongs to the glycosyltransferase 2 family. Plant cellulose synthase-like A subfamily.

It localises to the golgi apparatus membrane. It catalyses the reaction GDP-mannose + (glucomannan)n = GDP + (glucomannan)n+1.. Functionally, probable mannan synthase which consists of a 4-beta-mannosyltransferase activity on mannan using GDP-mannose. The beta-1,4-mannan product is the backbone for galactomannan synthesis by galactomannan galactosyltransferase. Galactomannan is a noncellulosic polysaccharides of plant cell wall. This is Probable glucomannan 4-beta-mannosyltransferase 10 from Arabidopsis thaliana (Mouse-ear cress).